The sequence spans 362 residues: MTELLKTPIHPLYAKYGAKTIDFGGWDLPVQFAGIKAEHEAVRTDAGLFDVSHMGEILVKGPDSTSYLQYLLSNDIEKIKIGKAQYNIMCYENGGTVDDLVVYKKSETEYILVVNAANTEKDFEWMVQNVRGDVTVTNVSAEYGQLALQGPSAEKILSKLTDVDLSSISFFGFIEDVEVAGVKTIISRSGYTGEDGFEIYMASADAGKVFEAILAEGVAPIGLGARDTLRLEAVLALYGQELSKDITPLEAGLNFAVKLKKEADFIGKEALIKQKEAGLTRKLVGIELIERGIPRHDYPVFLNDKEVGIVTSGTQSPTFGTNIGLALIDTAYAELGQELEVGIRNKKVKAKIVQTPFYKRAK.

It belongs to the GcvT family. In terms of assembly, the glycine cleavage system is composed of four proteins: P, T, L and H.

It catalyses the reaction N(6)-[(R)-S(8)-aminomethyldihydrolipoyl]-L-lysyl-[protein] + (6S)-5,6,7,8-tetrahydrofolate = N(6)-[(R)-dihydrolipoyl]-L-lysyl-[protein] + (6R)-5,10-methylene-5,6,7,8-tetrahydrofolate + NH4(+). The glycine cleavage system catalyzes the degradation of glycine. This chain is Aminomethyltransferase, found in Listeria welshimeri serovar 6b (strain ATCC 35897 / DSM 20650 / CCUG 15529 / CIP 8149 / NCTC 11857 / SLCC 5334 / V8).